A 363-amino-acid polypeptide reads, in one-letter code: 3-dehydroquinate synthase (363 aa).

Residues 134-135 (TT), lysine 147, lysine 156, and 174-177 (TLKT) contribute to the NAD(+) site. Glutamate 189, histidine 254, and histidine 271 together coordinate Zn(2+).

It belongs to the sugar phosphate cyclases superfamily. Dehydroquinate synthase family. The cofactor is Co(2+). Zn(2+) is required as a cofactor. Requires NAD(+) as cofactor.

The protein resides in the cytoplasm. The catalysed reaction is 7-phospho-2-dehydro-3-deoxy-D-arabino-heptonate = 3-dehydroquinate + phosphate. Its pathway is metabolic intermediate biosynthesis; chorismate biosynthesis; chorismate from D-erythrose 4-phosphate and phosphoenolpyruvate: step 2/7. Functionally, catalyzes the conversion of 3-deoxy-D-arabino-heptulosonate 7-phosphate (DAHP) to dehydroquinate (DHQ). The sequence is that of 3-dehydroquinate synthase from Prochlorococcus marinus (strain MIT 9515).